Here is a 267-residue protein sequence, read N- to C-terminus: REH2-associated factor 2 (267 aa).

Component of the REH2-associated complex (REH2C) composed of helicase REH2, associated factors H2F1 and H2F2, and mRNAs at various editing stages; the formation of the complex is RNA-independent. Interacts with various editing complexes including the RNA editing core (RECC) complex, the gRNA-binding (GRBC) complex (also known as the MRB1 complex) and the RNA editing mediator (REMC) complex.

It localises to the mitochondrion. Its function is as follows. May play a role in mitochondrial mRNA editing by facilitating the association of the gRNA-binding (GRBC) complex with the RNA editing core (RECC) complex. However, appears to be dispensable for mRNA editing per se. The protein is REH2-associated factor 2 of Trypanosoma brucei brucei (strain 927/4 GUTat10.1).